The sequence spans 292 residues: Probable ABC transporter permease protein PH1215 (292 aa).

6 helical membrane passes run 10–30 (IILF…FAVV), 72–92 (LLLI…LAIL), 106–126 (IYVL…AWMY), 160–180 (IIIA…LAGI), 215–235 (LSAF…IWVL), and 261–281 (FAYG…VVLP). Positions 68-284 (LRNNLLLILL…ALVVVLPYLY (217 aa)) constitute an ABC transmembrane type-1 domain.

It belongs to the binding-protein-dependent transport system permease family. MalFG subfamily.

It is found in the cell membrane. Its function is as follows. Probably part of a binding-protein-dependent transport system PH1214/15/16. Probably responsible for the translocation of the substrate across the membrane. This is Probable ABC transporter permease protein PH1215 from Pyrococcus horikoshii (strain ATCC 700860 / DSM 12428 / JCM 9974 / NBRC 100139 / OT-3).